We begin with the raw amino-acid sequence, 790 residues long: Kinesin-like protein KIF9 (790 aa).

The Kinesin motor domain occupies 6–340 (KVHAFVRVKP…LRFASRMKLV (335 aa)). ATP-binding positions include 12–14 (RVK) and 93–100 (GQTGAGKT). Residues 342 to 380 (TEPAINEKYDAERMVKNLEKELALLKQELAIHDSLTNRT) are a coiled coil. The disordered stretch occupies residues 477–578 (QNFGLGVAPF…IRPDTPPSKP (102 aa)). Over residues 525–534 (VSTSKTQLVP) the composition is skewed to polar residues. Phosphothreonine is present on Thr-530. 2 stretches are compositionally biased toward basic and acidic residues: residues 537 to 552 (KDGDVKDMLSRDRETS) and 561 to 570 (SPKEELRPIR). Ser-546 carries the post-translational modification Phosphoserine. The stretch at 658–690 (LLILKLKDLKKQYRSEYQDLRDLRAEIQYCQHL) forms a coiled coil.

This sequence belongs to the TRAFAC class myosin-kinesin ATPase superfamily. Kinesin family. Interacts with HYDIN.

It is found in the cytoplasm. The protein resides in the cytoskeleton. It localises to the cell projection. Its subcellular location is the cilium. The protein localises to the flagellum. It is found in the flagellum axoneme. Its function is as follows. Essential for normal male fertility and for progressive motility of spermatozoa. The protein is Kinesin-like protein KIF9 (KIF9) of Homo sapiens (Human).